The chain runs to 1677 residues: Vitellogenin (1677 aa).

An N-terminal signal peptide occupies residues Leu1–Ser8. Residues Phe17–Val655 enclose the Vitellogenin domain. Disordered stretches follow at residues Thr1089–Ile1232 and Phe1252–Asp1280. The segment covering Ser1098–Ser1122 has biased composition (low complexity). Over residues Arg1123–Arg1145 the composition is skewed to basic and acidic residues. A compositionally biased stretch (low complexity) spans Ser1169 to Arg1196. N-linked (GlcNAc...) asparagine glycosylation is found at Asn1182, Asn1202, Asn1217, and Asn1218. Residues Ser1197 to Arg1212 show a composition bias toward basic residues. Composition is skewed to low complexity over residues Asn1215 to Ser1229 and Ser1260 to Ser1273. The VWFD domain occupies Ser1490–Val1675. 2 cysteine pairs are disulfide-bonded: Cys1492/Cys1631 and Cys1515/Cys1674. Basic and acidic residues predominate over residues Gly1636–Gln1649. The segment at Gly1636 to Pro1659 is disordered.

Phosvitin, an egg yolk storage protein, is one of the most highly phosphorylated (10%) proteins in nature. As to expression, found in liver, testis and undifferentiated gonads of estrogen-treated fish. Not detected in the brain and spleen.

Precursor of the major egg-yolk proteins that are sources of nutrients during early development of oviparous organisms. In Acipenser transmontanus (White sturgeon), this protein is Vitellogenin.